Reading from the N-terminus, the 105-residue chain is Large ribosomal subunit protein uL24 (105 aa).

The protein belongs to the universal ribosomal protein uL24 family. Part of the 50S ribosomal subunit.

In terms of biological role, one of two assembly initiator proteins, it binds directly to the 5'-end of the 23S rRNA, where it nucleates assembly of the 50S subunit. Functionally, one of the proteins that surrounds the polypeptide exit tunnel on the outside of the subunit. The protein is Large ribosomal subunit protein uL24 of Clostridium kluyveri (strain ATCC 8527 / DSM 555 / NBRC 12016 / NCIMB 10680 / K1).